The sequence spans 486 residues: Membrane-bound lytic murein transglycosylase F (486 aa).

An N-terminal signal peptide occupies residues 1–29; sequence MFSPTALRPRYAKWLIATGLFLMLSGCVD. The interval 30 to 267 is non-LT domain; that stretch reads KPNTLERVKE…RLKDRYYGHV (238 aa). Residues 268–486 form an LT domain region; it reads DVLGYMGATT…SKPAQEPAPL (219 aa). The active site involves glutamate 314.

This sequence in the N-terminal section; belongs to the bacterial solute-binding protein 3 family. In the C-terminal section; belongs to the transglycosylase Slt family.

The protein resides in the cell outer membrane. The enzyme catalyses Exolytic cleavage of the (1-&gt;4)-beta-glycosidic linkage between N-acetylmuramic acid (MurNAc) and N-acetylglucosamine (GlcNAc) residues in peptidoglycan, from either the reducing or the non-reducing ends of the peptidoglycan chains, with concomitant formation of a 1,6-anhydrobond in the MurNAc residue.. Its function is as follows. Murein-degrading enzyme that degrades murein glycan strands and insoluble, high-molecular weight murein sacculi, with the concomitant formation of a 1,6-anhydromuramoyl product. Lytic transglycosylases (LTs) play an integral role in the metabolism of the peptidoglycan (PG) sacculus. Their lytic action creates space within the PG sacculus to allow for its expansion as well as for the insertion of various structures such as secretion systems and flagella. The chain is Membrane-bound lytic murein transglycosylase F from Pseudomonas fluorescens (strain Pf0-1).